Consider the following 239-residue polypeptide: Pre-mRNA-splicing factor isy1 (239 aa).

It belongs to the ISY1 family. Associated with the spliceosome.

Its subcellular location is the cytoplasm. The protein localises to the nucleus. Functionally, involved in pre-mRNA splicing. The protein is Pre-mRNA-splicing factor isy1 (msp-7) of Neurospora crassa (strain ATCC 24698 / 74-OR23-1A / CBS 708.71 / DSM 1257 / FGSC 987).